A 183-amino-acid polypeptide reads, in one-letter code: Gamma-crystallin N (183 aa).

Beta/gamma crystallin 'Greek key' domains lie at 6-46 (GKIT…RVES), 47-89 (GAWV…RPVG), 95-136 (FRID…KVYG), and 138-180 (GAWV…RRVL).

It belongs to the beta/gamma-crystallin family. In terms of assembly, monomer. As to expression, primordially eye-specific. Present in lens nucleus. In the retina, expression in observed in the outer plexiform layer (containing photoreceptors axons and synapses) and photoreceptor outer segments (at protein level). Also detected in the auditory hindbrain where it is highly expressed in the medial nucleus of the trapezoid body, but also present in other nuclei of the superior olivary complex.

Its function is as follows. Crystallins are the dominant structural components of the vertebrate eye lens. Also plays an important role for integrity and function of auditory nuclei. This Mus musculus (Mouse) protein is Gamma-crystallin N.